The following is a 385-amino-acid chain: Protein kup-1 (385 aa).

Disordered stretches follow at residues 1–20 (MDDE…VRED) and 326–385 (SLAS…PDEY). 3 stretches are compositionally biased toward basic and acidic residues: residues 8 to 20 (GSDH…VRED), 339 to 351 (RTDE…DDIV), and 364 to 385 (GRVE…PDEY).

The protein is Protein kup-1 (kup-1) of Caenorhabditis elegans.